A 199-amino-acid chain; its full sequence is Pyridoxal 5'-phosphate synthase subunit PdxT (199 aa).

51-53 is an L-glutamine binding site; the sequence is GES. C83 (nucleophile) is an active-site residue. L-glutamine is bound by residues R110 and 137–138; that span reads IR. Catalysis depends on charge relay system residues H172 and E174.

The protein belongs to the glutaminase PdxT/SNO family. In terms of assembly, in the presence of PdxS, forms a dodecamer of heterodimers. Only shows activity in the heterodimer.

The catalysed reaction is aldehydo-D-ribose 5-phosphate + D-glyceraldehyde 3-phosphate + L-glutamine = pyridoxal 5'-phosphate + L-glutamate + phosphate + 3 H2O + H(+). The enzyme catalyses L-glutamine + H2O = L-glutamate + NH4(+). It participates in cofactor biosynthesis; pyridoxal 5'-phosphate biosynthesis. Functionally, catalyzes the hydrolysis of glutamine to glutamate and ammonia as part of the biosynthesis of pyridoxal 5'-phosphate. The resulting ammonia molecule is channeled to the active site of PdxS. The chain is Pyridoxal 5'-phosphate synthase subunit PdxT from Thermoplasma volcanium (strain ATCC 51530 / DSM 4299 / JCM 9571 / NBRC 15438 / GSS1).